The primary structure comprises 269 residues: Glutamate racemase (269 aa).

Substrate is bound by residues 14–15 (DS) and 46–47 (YS). The Proton donor/acceptor role is filled by Cys-78. 79–80 (NT) provides a ligand contact to substrate. The active-site Proton donor/acceptor is the Cys-189. 190–191 (TH) lines the substrate pocket.

This sequence belongs to the aspartate/glutamate racemases family.

It catalyses the reaction L-glutamate = D-glutamate. The protein operates within cell wall biogenesis; peptidoglycan biosynthesis. Its function is as follows. Provides the (R)-glutamate required for cell wall biosynthesis. The polypeptide is Glutamate racemase (Haemophilus influenzae (strain 86-028NP)).